The primary structure comprises 418 residues: Serine hydroxymethyltransferase (418 aa).

(6S)-5,6,7,8-tetrahydrofolate contacts are provided by residues L121 and 125–127 (GHL). An N6-(pyridoxal phosphate)lysine modification is found at K230. (6S)-5,6,7,8-tetrahydrofolate is bound at residue 356 to 358 (SPF).

The protein belongs to the SHMT family. Homodimer. Requires pyridoxal 5'-phosphate as cofactor.

It localises to the cytoplasm. The enzyme catalyses (6R)-5,10-methylene-5,6,7,8-tetrahydrofolate + glycine + H2O = (6S)-5,6,7,8-tetrahydrofolate + L-serine. It functions in the pathway one-carbon metabolism; tetrahydrofolate interconversion. Its pathway is amino-acid biosynthesis; glycine biosynthesis; glycine from L-serine: step 1/1. In terms of biological role, catalyzes the reversible interconversion of serine and glycine with tetrahydrofolate (THF) serving as the one-carbon carrier. This reaction serves as the major source of one-carbon groups required for the biosynthesis of purines, thymidylate, methionine, and other important biomolecules. Also exhibits THF-independent aldolase activity toward beta-hydroxyamino acids, producing glycine and aldehydes, via a retro-aldol mechanism. The polypeptide is Serine hydroxymethyltransferase (Pseudoalteromonas translucida (strain TAC 125)).